The chain runs to 1109 residues: DNA-directed RNA polymerase subunit beta (1109 aa).

This sequence belongs to the RNA polymerase beta chain family. As to quaternary structure, in plastids the minimal PEP RNA polymerase catalytic core is composed of four subunits: alpha, beta, beta', and beta''. When a (nuclear-encoded) sigma factor is associated with the core the holoenzyme is formed, which can initiate transcription.

It is found in the plastid. The protein resides in the chloroplast. It carries out the reaction RNA(n) + a ribonucleoside 5'-triphosphate = RNA(n+1) + diphosphate. DNA-dependent RNA polymerase catalyzes the transcription of DNA into RNA using the four ribonucleoside triphosphates as substrates. In Nephroselmis olivacea (Green alga), this protein is DNA-directed RNA polymerase subunit beta.